The chain runs to 142 residues: Hemoglobin subunit alpha (142 aa).

The Globin domain occupies 2 to 142; the sequence is VLSADDKANI…VSTVLTSKYR (141 aa). The residue at position 4 (S4) is a Phosphoserine. An N6-succinyllysine mark is found at K8 and K12. N6-acetyllysine; alternate is present on K17. K17 carries the N6-succinyllysine; alternate modification. A Phosphotyrosine modification is found at Y25. Phosphoserine is present on S36. The residue at position 41 (K41) is an N6-succinyllysine. Phosphoserine is present on S50. Residue H59 coordinates O2. Position 88 (H88) interacts with heme b. The residue at position 109 (T109) is a Phosphothreonine. S125 and S132 each carry phosphoserine. A phosphothreonine mark is found at T135 and T138. A Phosphoserine modification is found at S139.

It belongs to the globin family. In terms of assembly, heterotetramer of two alpha chains and two beta chains. Red blood cells.

In terms of biological role, involved in oxygen transport from the lung to the various peripheral tissues. Its function is as follows. Hemopressin acts as an antagonist peptide of the cannabinoid receptor CNR1. Hemopressin-binding efficiently blocks cannabinoid receptor CNR1 and subsequent signaling. This Cricetomys gambianus (Northern giant pouched rat) protein is Hemoglobin subunit alpha (HBA).